Consider the following 185-residue polypeptide: Serine/arginine-rich splicing factor RSZ21 (185 aa).

The region spanning 2–73 (ARLYVGNLDP…WRVELSRNSS (72 aa)) is the RRM domain. Residues 86–103 (MKCYECGETGHFARECRL) form a CCHC-type zinc finger. The disordered stretch occupies residues 104–185 (RIGPGGLGSG…DGGRYRRSRS (82 aa)). The segment covering 113-123 (GKRRSRSRSRS) has biased composition (basic residues). Composition is skewed to low complexity over residues 124–138 (RSPQYRKSPTYGRRS) and 151–162 (VSPVRGRSYSRS).

The protein belongs to the splicing factor SR family. Extensively phosphorylated on serine residues in the RS domain. In terms of tissue distribution, expressed in roots, leaves and immature seeds.

The protein resides in the nucleus. Involved in pre-mRNA splicing. The polypeptide is Serine/arginine-rich splicing factor RSZ21 (RSZP21) (Oryza sativa subsp. japonica (Rice)).